A 559-amino-acid polypeptide reads, in one-letter code: Cytoplasmic polyadenylation element-binding protein 1 (559 aa).

The segment at 222–243 (SRMDHSSSPLTPPPSASPSGSL) is disordered. RRM domains lie at 304–401 (CKVF…DAQV) and 423–504 (NTVF…PYLE). The Zn(2+) site is built by Cys508, Cys511, Cys520, Cys525, Cys530, Cys533, His538, and His546.

Belongs to the RRM CPEB family. As to expression, expressed in oocytes (at protein level). During oocyte maturation becomes detectable at stage Ib, and remains ubiquitously distributed within the oocyte cytoplasm until stage II. It then follows a gradual accumulation to the future animal pole during stage III, and remains localized to this pole at stage IV (at protein level). Expressed in oocytes, blastomeres and pre-mid-blastula transition embryos. Its expression during oogenesis is ubiquitous at stages I and II, but gradually accumulated at the periphery of the oocyte in the presumptive animal pole during stage III. Expression was maintained in that region at stage IV, and then became delocalized at stage V to cover a much broader area presumably encompassing the future blastodisc.

It is found in the cytoplasm. In terms of biological role, sequence-specific RNA-binding protein that regulates mRNA cytoplasmic polyadenylation and translation initiation during oocyte maturation and early development. Binds to the cytoplasmic polyadenylation element (CPE), an uridine-rich sequence element (consensus sequence 5'-UUUUUAU-3') within the mRNA 3'-UTR. The sequence is that of Cytoplasmic polyadenylation element-binding protein 1 (cpeb1) from Danio rerio (Zebrafish).